The primary structure comprises 503 residues: Maturase K (503 aa).

It belongs to the intron maturase 2 family. MatK subfamily.

It is found in the plastid. The protein resides in the chloroplast. Its function is as follows. Usually encoded in the trnK tRNA gene intron. Probably assists in splicing its own and other chloroplast group II introns. This Eucalyptus globulus (Tasmanian blue gum) protein is Maturase K.